Consider the following 32-residue polypeptide: Calichemicin antitumor antibiotic biosynthesis protein (32 aa).

In Micromonospora echinospora (Micromonospora purpurea), this protein is Calichemicin antitumor antibiotic biosynthesis protein.